We begin with the raw amino-acid sequence, 175 residues long: uncharacterized protein (175 aa).

The protein belongs to the asfivirus B175L family.

This is an uncharacterized protein from Ornithodoros (relapsing fever ticks).